A 470-amino-acid chain; its full sequence is Ras-like GTPase HI_1637 (470 aa).

The Walker A motif signature appears at 27–34 (GLSRSGKT). Residues serine 29, glycine 32, lysine 33, threonine 34, alanine 35, tryptophan 98, serine 101, threonine 102, arginine 103, lysine 342, aspartate 344, and histidine 345 each coordinate GTP. The GDP site is built by glycine 32, lysine 33, threonine 34, alanine 35, tryptophan 98, serine 101, and threonine 102. GDP contacts are provided by lysine 342, aspartate 344, histidine 345, alanine 383, and valine 384. Valine 384 is a binding site for GTP.

It to E.coli YcjX. As to quaternary structure, monomer in solution. Mg(2+) is required as a cofactor.

The enzyme catalyses GTP + H2O = GDP + phosphate + H(+). Its activity is regulated as follows. Alternates between an inactive form bound to GDP and an active form bound to GTP. Likely activated by a guanine nucleotide-exchange factor (GEF). Functionally, binds GTP and GDP. Has intrinsic GTPase activity. Does not hydrolyze ATP. May act as a transducer of stress responses. The polypeptide is Ras-like GTPase HI_1637 (Haemophilus influenzae (strain ATCC 51907 / DSM 11121 / KW20 / Rd)).